Here is a 484-residue protein sequence, read N- to C-terminus: Ribosomal RNA small subunit methyltransferase F (484 aa).

S-adenosyl-L-methionine-binding positions include 119 to 125 (ASAPGSK), E143, D170, and D188. C241 (nucleophile) is an active-site residue.

It belongs to the class I-like SAM-binding methyltransferase superfamily. RsmB/NOP family.

The protein resides in the cytoplasm. It carries out the reaction cytidine(1407) in 16S rRNA + S-adenosyl-L-methionine = 5-methylcytidine(1407) in 16S rRNA + S-adenosyl-L-homocysteine + H(+). Functionally, specifically methylates the cytosine at position 1407 (m5C1407) of 16S rRNA. In Shewanella frigidimarina (strain NCIMB 400), this protein is Ribosomal RNA small subunit methyltransferase F.